The sequence spans 311 residues: MSSPRHYLQFSDFTAAEYDHVFQRTRWIKEKFKQYEPYHPLFDRTLVMIFEKASTRTRLSFEAGMQQLGGSAIYLNTRDSQLGRGEPVEDAAQVISRMSDLVMIRTFEQDIIERFAAYSRVPVINGLTNEYHPCQILADIYTFIEHRGSIKGKTVAWVGDSNNMCNTWLQAAEVLDFKVRVSTPPGYEVEPTDAGLRGTAHFAQFSDPLEACRGADLVTTDVWTSMGFEAENEARMKAFADWCVDAEMMSVAAPDALFMHCLPAHRGEEVTAEVIDGPQSVVWDEAENRLHVQKALMEYLVLGRVGDEESN.

Carbamoyl phosphate-binding positions include 54–57 (STRT), Gln81, Arg105, and 132–135 (HPCQ). Residues Asn163, Asp221, and 225–226 (SM) each bind L-ornithine. Carbamoyl phosphate-binding positions include 261–262 (CL) and Arg289.

The protein belongs to the aspartate/ornithine carbamoyltransferase superfamily. OTCase family.

The protein localises to the cytoplasm. It catalyses the reaction carbamoyl phosphate + L-ornithine = L-citrulline + phosphate + H(+). Its pathway is amino-acid degradation; L-arginine degradation via ADI pathway; carbamoyl phosphate from L-arginine: step 2/2. Reversibly catalyzes the transfer of the carbamoyl group from carbamoyl phosphate (CP) to the N(epsilon) atom of ornithine (ORN) to produce L-citrulline. This Azoarcus sp. (strain BH72) protein is Ornithine carbamoyltransferase.